The chain runs to 275 residues: MTYQKQYQMQTHHMQQQQLHHFVFVHGSCHGAWCWFKLAAKLKLDGHRVTAIDLGGSGVDTRQLHEVRLVSAYLEPLMSFMESLPENEKVVLVGHSYGGIGTSLAMERFPTKVSVGIFLSAYMPHHDSPPAVLIQEYFTRLPEGFAMDCEFTFEEGLEHPPSSVLFGTSFLKEKAYSNCQLEDLELAMALMKPSWLYTKEMGGEDLITKERYGSGKRVFIVCEGDNVVPEEIQKWMISNYEPHEVKRIEEAGHMAMLTKPHELSQLLQEIAAKYN.

Residue serine 96 is the Acyl-ester intermediate of the active site. Active-site charge relay system residues include aspartate 225 and histidine 253.

The protein belongs to the AB hydrolase superfamily. Methylesterase family.

The catalysed reaction is methyl (-)-jasmonate + H2O = jasmonate + methanol + H(+). It functions in the pathway plant hormone biosynthesis. Its pathway is lipid metabolism; oxylipin biosynthesis. Methylesterase shown to have methyl jasmonate (MeJA) esterase activity in vitro. The chain is Methylesterase 10 from Arabidopsis thaliana (Mouse-ear cress).